A 433-amino-acid chain; its full sequence is CinA-like protein (433 aa).

This sequence belongs to the CinA family.

The chain is CinA-like protein from Frankia casuarinae (strain DSM 45818 / CECT 9043 / HFP020203 / CcI3).